Reading from the N-terminus, the 449-residue chain is 23S rRNA (uracil(1939)-C(5))-methyltransferase RlmD (449 aa).

The TRAM domain occupies 12–70; it reads SKQLSAKQSFSVHQLDHLGAGIAQHQGKVVFIPGALPSETVQAQLTEQKKNYARAKLIK. [4Fe-4S] cluster-binding residues include Cys-83, Cys-89, Cys-92, and Cys-170. 6 residues coordinate S-adenosyl-L-methionine: Gln-282, Phe-311, Asn-316, Glu-332, Asp-359, and Asp-379. Cys-405 (nucleophile) is an active-site residue.

Belongs to the class I-like SAM-binding methyltransferase superfamily. RNA M5U methyltransferase family. RlmD subfamily.

The catalysed reaction is uridine(1939) in 23S rRNA + S-adenosyl-L-methionine = 5-methyluridine(1939) in 23S rRNA + S-adenosyl-L-homocysteine + H(+). Catalyzes the formation of 5-methyl-uridine at position 1939 (m5U1939) in 23S rRNA. The polypeptide is 23S rRNA (uracil(1939)-C(5))-methyltransferase RlmD (Shewanella sp. (strain MR-4)).